Reading from the N-terminus, the 209-residue chain is Ribosomal RNA large subunit methyltransferase E (209 aa).

Residues Gly-63, Trp-65, Asp-83, Asp-99, and Asp-124 each coordinate S-adenosyl-L-methionine. The active-site Proton acceptor is the Lys-164.

It belongs to the class I-like SAM-binding methyltransferase superfamily. RNA methyltransferase RlmE family.

The protein resides in the cytoplasm. It catalyses the reaction uridine(2552) in 23S rRNA + S-adenosyl-L-methionine = 2'-O-methyluridine(2552) in 23S rRNA + S-adenosyl-L-homocysteine + H(+). Functionally, specifically methylates the uridine in position 2552 of 23S rRNA at the 2'-O position of the ribose in the fully assembled 50S ribosomal subunit. This chain is Ribosomal RNA large subunit methyltransferase E, found in Sodalis glossinidius (strain morsitans).